The following is a 115-amino-acid chain: NAD(P)H-quinone oxidoreductase subunit M (115 aa).

This sequence belongs to the complex I NdhM subunit family. In terms of assembly, NDH-1 can be composed of about 15 different subunits; different subcomplexes with different compositions have been identified which probably have different functions.

The protein resides in the cellular thylakoid membrane. It carries out the reaction a plastoquinone + NADH + (n+1) H(+)(in) = a plastoquinol + NAD(+) + n H(+)(out). The catalysed reaction is a plastoquinone + NADPH + (n+1) H(+)(in) = a plastoquinol + NADP(+) + n H(+)(out). NDH-1 shuttles electrons from an unknown electron donor, via FMN and iron-sulfur (Fe-S) centers, to quinones in the respiratory and/or the photosynthetic chain. The immediate electron acceptor for the enzyme in this species is believed to be plastoquinone. Couples the redox reaction to proton translocation, and thus conserves the redox energy in a proton gradient. Cyanobacterial NDH-1 also plays a role in inorganic carbon-concentration. This is NAD(P)H-quinone oxidoreductase subunit M from Prochlorococcus marinus (strain AS9601).